A 394-amino-acid polypeptide reads, in one-letter code: Nuclear hormone receptor family member nhr-18 (394 aa).

A DNA-binding region (nuclear receptor) is located at residues 8-83; the sequence is SGSCEVCGDK…VGMDTRRFQT (76 aa). 2 NR C4-type zinc fingers span residues 11–31 and 48–71; these read CEVCGDKTSGRHFGVMSCRAC and CPNGTCHTSVNGKFNCKQCRLKKC. In terms of domain architecture, NR LBD spans 134 to 394; it reads MLQKPTNHVL…FSHPEMFEAT (261 aa).

This sequence belongs to the nuclear hormone receptor family.

Its subcellular location is the nucleus. Functionally, orphan nuclear receptor. The protein is Nuclear hormone receptor family member nhr-18 (nhr-18) of Caenorhabditis elegans.